A 479-amino-acid polypeptide reads, in one-letter code: Ribulose bisphosphate carboxylase large chain (479 aa).

Residues 1–2 constitute a propeptide that is removed on maturation; that stretch reads MS. Asn-123 and Thr-173 together coordinate substrate. Lys-175 (proton acceptor) is an active-site residue. Lys-177 lines the substrate pocket. Positions 201, 203, and 204 each coordinate Mg(2+). At Lys-201 the chain carries N6-carboxylysine. Residue Ser-208 is modified to Phosphoserine. Catalysis depends on His-294, which acts as the Proton acceptor. The substrate site is built by Arg-295 and His-327. Position 330 is a phosphothreonine (Thr-330). Ser-379 contributes to the substrate binding site.

This sequence belongs to the RuBisCO large chain family. Type I subfamily. Heterohexadecamer of 8 large chains and 8 small chains; disulfide-linked. The disulfide link is formed within the large subunit homodimers. The cofactor is Mg(2+). Post-translationally, the disulfide bond which can form in the large chain dimeric partners within the hexadecamer appears to be associated with oxidative stress and protein turnover.

It localises to the plastid. The protein resides in the chloroplast. It catalyses the reaction 2 (2R)-3-phosphoglycerate + 2 H(+) = D-ribulose 1,5-bisphosphate + CO2 + H2O. The catalysed reaction is D-ribulose 1,5-bisphosphate + O2 = 2-phosphoglycolate + (2R)-3-phosphoglycerate + 2 H(+). Its function is as follows. RuBisCO catalyzes two reactions: the carboxylation of D-ribulose 1,5-bisphosphate, the primary event in carbon dioxide fixation, as well as the oxidative fragmentation of the pentose substrate in the photorespiration process. Both reactions occur simultaneously and in competition at the same active site. The sequence is that of Ribulose bisphosphate carboxylase large chain from Barbarea verna (Land cress).